A 392-amino-acid polypeptide reads, in one-letter code: O-phospho-L-seryl-tRNA:Cys-tRNA synthase 1 (392 aa).

Pyridoxal 5'-phosphate-binding positions include 85 to 86, N190, and 213 to 215; these read AR and SGH. K216 is subject to N6-(pyridoxal phosphate)lysine.

The protein belongs to the SepCysS family. In terms of assembly, homodimer. Interacts with SepRS. It depends on pyridoxal 5'-phosphate as a cofactor.

The enzyme catalyses O-phospho-L-seryl-tRNA(Cys) + hydrogen sulfide + H(+) = L-cysteinyl-tRNA(Cys) + phosphate. Converts O-phospho-L-seryl-tRNA(Cys) (Sep-tRNA(Cys)) to L-cysteinyl-tRNA(Cys) (Cys-tRNA(Cys)). In Methanoregula boonei (strain DSM 21154 / JCM 14090 / 6A8), this protein is O-phospho-L-seryl-tRNA:Cys-tRNA synthase 1.